The following is a 78-amino-acid chain: Small integral membrane protein 1 (78 aa).

The residue at position 1 (methionine 1) is an N-acetylmethionine. Residues 1–22 form a disordered region; it reads MQSQESGVHYSRWDSSSRDEVS. At 1–48 the chain is on the cytoplasmic side; it reads MQSQESGVHYSRWDSSSRDEVSMTAMSSSEEASCYRRISQKLCSGKLG. Residues serine 6, serine 17, serine 22, and serine 27 each carry the phosphoserine modification. The span at 11–21 shows a compositional bias: basic and acidic residues; the sequence is SRWDSSSRDEV. The chain crosses the membrane as a helical; Signal-anchor for type II membrane protein span at residues 49 to 69; sequence IAMKVLGGVALFWIIFILGYI. Residues 70 to 78 are Extracellular-facing; the sequence is TGYYVHKCK.

Belongs to the SMIM1 family. Homooligomer; disulfide-linked.

It localises to the cell membrane. Functionally, regulator of red blood cell formation. This chain is Small integral membrane protein 1, found in Mus musculus (Mouse).